A 196-amino-acid polypeptide reads, in one-letter code: dITP/XTP pyrophosphatase (196 aa).

10–15 (SGNKGK) is a binding site for substrate. Positions 40 and 69 each coordinate Mg(2+). D69 functions as the Proton acceptor in the catalytic mechanism. Substrate contacts are provided by residues S70, 147 to 150 (FGYD), K170, and 175 to 176 (HR).

It belongs to the HAM1 NTPase family. As to quaternary structure, homodimer. Requires Mg(2+) as cofactor.

It carries out the reaction XTP + H2O = XMP + diphosphate + H(+). The enzyme catalyses dITP + H2O = dIMP + diphosphate + H(+). The catalysed reaction is ITP + H2O = IMP + diphosphate + H(+). In terms of biological role, pyrophosphatase that catalyzes the hydrolysis of nucleoside triphosphates to their monophosphate derivatives, with a high preference for the non-canonical purine nucleotides XTP (xanthosine triphosphate), dITP (deoxyinosine triphosphate) and ITP. Seems to function as a house-cleaning enzyme that removes non-canonical purine nucleotides from the nucleotide pool, thus preventing their incorporation into DNA/RNA and avoiding chromosomal lesions. In Prochlorococcus marinus (strain NATL1A), this protein is dITP/XTP pyrophosphatase.